We begin with the raw amino-acid sequence, 503 residues long: Probable cytosol aminopeptidase (503 aa).

Mn(2+) is bound by residues lysine 268 and aspartate 273. The active site involves lysine 280. Mn(2+)-binding residues include aspartate 291, aspartate 350, and glutamate 352. The active site involves arginine 354.

It belongs to the peptidase M17 family. Mn(2+) is required as a cofactor.

It is found in the cytoplasm. It carries out the reaction Release of an N-terminal amino acid, Xaa-|-Yaa-, in which Xaa is preferably Leu, but may be other amino acids including Pro although not Arg or Lys, and Yaa may be Pro. Amino acid amides and methyl esters are also readily hydrolyzed, but rates on arylamides are exceedingly low.. It catalyses the reaction Release of an N-terminal amino acid, preferentially leucine, but not glutamic or aspartic acids.. Its function is as follows. Presumably involved in the processing and regular turnover of intracellular proteins. Catalyzes the removal of unsubstituted N-terminal amino acids from various peptides. The chain is Probable cytosol aminopeptidase from Methylobacterium radiotolerans (strain ATCC 27329 / DSM 1819 / JCM 2831 / NBRC 15690 / NCIMB 10815 / 0-1).